The chain runs to 364 residues: UDP-N-acetylglucosamine--N-acetylmuramyl-(pentapeptide) pyrophosphoryl-undecaprenol N-acetylglucosamine transferase (364 aa).

UDP-N-acetyl-alpha-D-glucosamine-binding positions include 10-12, Asn124, Arg161, Ser195, and Gln291; that span reads TAG.

This sequence belongs to the glycosyltransferase 28 family. MurG subfamily.

The protein resides in the cell membrane. It carries out the reaction di-trans,octa-cis-undecaprenyl diphospho-N-acetyl-alpha-D-muramoyl-L-alanyl-D-glutamyl-meso-2,6-diaminopimeloyl-D-alanyl-D-alanine + UDP-N-acetyl-alpha-D-glucosamine = di-trans,octa-cis-undecaprenyl diphospho-[N-acetyl-alpha-D-glucosaminyl-(1-&gt;4)]-N-acetyl-alpha-D-muramoyl-L-alanyl-D-glutamyl-meso-2,6-diaminopimeloyl-D-alanyl-D-alanine + UDP + H(+). It functions in the pathway cell wall biogenesis; peptidoglycan biosynthesis. In terms of biological role, cell wall formation. Catalyzes the transfer of a GlcNAc subunit on undecaprenyl-pyrophosphoryl-MurNAc-pentapeptide (lipid intermediate I) to form undecaprenyl-pyrophosphoryl-MurNAc-(pentapeptide)GlcNAc (lipid intermediate II). The polypeptide is UDP-N-acetylglucosamine--N-acetylmuramyl-(pentapeptide) pyrophosphoryl-undecaprenol N-acetylglucosamine transferase (Streptomyces coelicolor (strain ATCC BAA-471 / A3(2) / M145)).